The sequence spans 1040 residues: Myoblast growth factor receptor egl-15 (1040 aa).

The N-terminal stretch at 1–19 is a signal peptide; it reads MSYFLASCLGVGLLSTVSC. The Extracellular portion of the chain corresponds to 20-525; the sequence is SLQGLTSHYR…PKIDRWTTSD (506 aa). The region spanning 33-125 is the Ig-like C2-type 1 domain; the sequence is PRFKHVANER…GQISRNFTVE (93 aa). Residues cysteine 55 and cysteine 109 are joined by a disulfide bond. Residue asparagine 121 is glycosylated (N-linked (GlcNAc...) asparagine). A compositionally biased stretch (basic and acidic residues) spans 234 to 257; it reads VHDSEESPSESRTEFINADEKENK. Positions 234 to 267 are disordered; sequence VHDSEESPSESRTEFINADEKENKEDEEEDYSVS. N-linked (GlcNAc...) asparagine glycans are attached at residues asparagine 280 and asparagine 299. 2 consecutive Ig-like C2-type domains span residues 287–383 and 391–501; these read PYFK…FHVI and PPII…ATLT. A disulfide bridge connects residues cysteine 314 and cysteine 367. Asparagine 401, asparagine 407, asparagine 433, asparagine 440, asparagine 449, asparagine 474, and asparagine 497 each carry an N-linked (GlcNAc...) asparagine glycan. A disulfide bridge connects residues cysteine 414 and cysteine 485. A helical transmembrane segment spans residues 526-549; it reads YIFTTILLFLLLAATLFGILFMVC. The Cytoplasmic portion of the chain corresponds to 550–1040; that stretch reads KQTLHKKGFM…NNNSMSKPEF (491 aa). In terms of domain architecture, Protein kinase spans 640 to 931; it reads LSLVHMLGEG…KTIVDYLDWM (292 aa). ATP-binding positions include 646 to 654 and lysine 672; that span reads LGEGAFGEV. Aspartate 797 acts as the Proton acceptor in catalysis. A Phosphotyrosine; by autocatalysis modification is found at tyrosine 828. 2 disordered regions span residues 952 to 984 and 1021 to 1040; these read ERSTASGPVSPMESFQKKRKHRPLSAPVNLPSE and TPETSQRIPSNNNSMSKPEF. The span at 1022–1040 shows a compositional bias: polar residues; sequence PETSQRIPSNNNSMSKPEF.

Belongs to the protein kinase superfamily. Tyr protein kinase family. Fibroblast growth factor receptor subfamily. Mg(2+) serves as cofactor. Activity is regulated by the phosphatase clr-1, however it is not known whether clr-1 acts directly on egl-15.

The protein resides in the membrane. It catalyses the reaction L-tyrosyl-[protein] + ATP = O-phospho-L-tyrosyl-[protein] + ADP + H(+). Its function is as follows. Receptor tyrosine kinase required for larval development. May phosphorylate adapter protein soc-1 which in turn may result in the recruitment and/or activation of phosphatase ptp-2. May activate the Ras/MAPK kinase signaling pathway which includes sem-5, sos-1, let-60/Ras, lin-45/Raf, mek-2 and mpk-1. Acts in the hypodermis to regulate axon growth and fluid homeostasis. Activates protein degradation in muscles. Probably following interaction with ligand let-756, negatively regulates membrane protrusion from body wall muscles during larval development. Plays a role in nicotinic acetylcholine receptor (nAChR)-mediated sensitivity to nicotine. Regulates synaptic levels of nAChR subunit lev-1 in the nerve cord. Functionally, affects the maintenance of axon position without affecting axon growth. Interaction with egl-17 is required for the guidance of sex myoblast migration during gonad development. Interaction with let-756 appears to play a role in maintaining body morphology at higher temperatures. The protein is Myoblast growth factor receptor egl-15 (egl-15) of Caenorhabditis elegans.